A 435-amino-acid polypeptide reads, in one-letter code: AMSH-like protease sst2 (435 aa).

The span at 162–181 (TDLLSPDSQKLSKSSSDLPQ) shows a compositional bias: low complexity. Residues 162–185 (TDLLSPDSQKLSKSSSDLPQFDYP) form a disordered region. At Thr-192 the chain carries Phosphothreonine. The MPN domain occupies 262 to 392 (TIYLPKLLKK…FRLLDPEGLQ (131 aa)). Zn(2+) is bound by residues His-341, His-343, Asp-354, His-356, Cys-397, His-404, and His-406. The JAMM motif motif lies at 341-354 (HTHPTQTCFMSSVD).

It belongs to the peptidase M67C family. It depends on Zn(2+) as a cofactor.

It localises to the cytoplasm. It is found in the endosome. Its function is as follows. Zinc metalloprotease that specifically cleaves 'Lys-63'-linked polyubiquitin chains. Does not cleave 'Lys-48'-linked polyubiquitin chains. Plays a role in the multivesicular body (MVB) sorting pathway. Required for ubiquitin-dependent sorting of proteins into the endosome and subsequent trafficking to the vacuole. May regulate MVB sorting through deubiquitination of ubiquitinated ESCRT proteins. In Schizosaccharomyces pombe (strain 972 / ATCC 24843) (Fission yeast), this protein is AMSH-like protease sst2 (sst2).